We begin with the raw amino-acid sequence, 194 residues long: 21 kDa hemolysin (194 aa).

The signal sequence occupies residues 1–19 (MRTRSRSTVRPLWPPPSPA). 2 consecutive BON domains span residues 49–118 (DDEV…RTGE) and 127–194 (IDSW…NYVQ).

The protein localises to the periplasm. This chain is 21 kDa hemolysin (hly), found in Actinobacillus pleuropneumoniae (Haemophilus pleuropneumoniae).